The primary structure comprises 269 residues: Glutamate racemase (269 aa).

Substrate-binding positions include 13–14 (DS) and 45–46 (YS). Catalysis depends on cysteine 77, which acts as the Proton donor/acceptor. 78-79 (NT) lines the substrate pocket. Catalysis depends on cysteine 188, which acts as the Proton donor/acceptor. A substrate-binding site is contributed by 189–190 (TH).

The protein belongs to the aspartate/glutamate racemases family.

It carries out the reaction L-glutamate = D-glutamate. Its pathway is cell wall biogenesis; peptidoglycan biosynthesis. Provides the (R)-glutamate required for cell wall biosynthesis. In Pasteurella multocida (strain Pm70), this protein is Glutamate racemase.